The following is a 125-amino-acid chain: Glycine cleavage system H protein (125 aa).

Residues isoleucine 19–arginine 101 form the Lipoyl-binding domain. Lysine 60 is subject to N6-lipoyllysine.

It belongs to the GcvH family. As to quaternary structure, the glycine cleavage system is composed of four proteins: P, T, L and H. Requires (R)-lipoate as cofactor.

Functionally, the glycine cleavage system catalyzes the degradation of glycine. The H protein shuttles the methylamine group of glycine from the P protein to the T protein. This Parvibaculum lavamentivorans (strain DS-1 / DSM 13023 / NCIMB 13966) protein is Glycine cleavage system H protein.